The following is a 254-amino-acid chain: NAD kinase (254 aa).

D44 acts as the Proton acceptor in catalysis. NAD(+) contacts are provided by residues 44–45 (DG), 114–115 (NE), D144, A152, 155–160 (TAYNYS), and A179.

The protein belongs to the NAD kinase family. A divalent metal cation is required as a cofactor.

It localises to the cytoplasm. It catalyses the reaction NAD(+) + ATP = ADP + NADP(+) + H(+). Its function is as follows. Involved in the regulation of the intracellular balance of NAD and NADP, and is a key enzyme in the biosynthesis of NADP. Catalyzes specifically the phosphorylation on 2'-hydroxyl of the adenosine moiety of NAD to yield NADP. This is NAD kinase from Cereibacter sphaeroides (strain ATCC 17025 / ATH 2.4.3) (Rhodobacter sphaeroides).